Here is a 190-residue protein sequence, read N- to C-terminus: Embryo-specific protein ATS3B (190 aa).

Residues 1–24 form the signal peptide; that stretch reads MASVRLFFTLISFVFIISTSVYES. An N-linked (GlcNAc...) asparagine glycan is attached at Asn-37. A PLAT domain is found at 48–158; it reads CAYTVIISTS…ESVWYGFNYC (111 aa).

In terms of assembly, interacts with EULS3 (via N-terminus). As to expression, expressed in roots, rosette leaves, stems, cauline leaves and flowers.

It localises to the secreted. Functionally, may play a role during embryo development. In Arabidopsis thaliana (Mouse-ear cress), this protein is Embryo-specific protein ATS3B.